The following is a 266-amino-acid chain: MLQYAFMRNAFVASFLIALLCPLVGMHLVLRRYALMGDALAHGSLAGVSIAVSCGIHPGWGSFFFTALVGVLIEFLRAFFKNHHDLILSIVLSLSVGIAVTLLSSGLIQADIDSYLFGSILVVSTRDLWIMLALSVFCVGTLALRYHQLLYLAFDEETARICGVAADGINYVASVVISATIAASIKITGILVLSSLMTVPVATALQLRVGFLLTLVAAFLFSMLDTALGLVFSYYLNVAPGGFTALVSVVVLMLVIALTQVGRART.

The next 8 helical transmembrane spans lie at 10–30, 34–54, 56–76, 88–108, 120–140, 172–192, 211–231, and 238–258; these read AFVA…HLVL, ALMG…AVSC, IHPG…IEFL, LSIV…SGLI, ILVV…FCVG, VASV…GILV, FLLT…LGLV, and VAPG…VIAL.

The protein belongs to the ABC-3 integral membrane protein family.

The protein localises to the cell inner membrane. In terms of biological role, part of an ATP-driven transport system TP_0034/TP_0035/TP_0036 for a metal. The polypeptide is Probable metal transport system membrane protein TP_0036 (Treponema pallidum (strain Nichols)).